The primary structure comprises 148 residues: UPF0756 membrane protein YeaL (148 aa).

The next 4 helical transmembrane spans lie at 14–34 (ALGF…LIIV), 51–71 (LSIG…SGTL), 86–106 (LVAI…VTLM), and 121–141 (VLGV…AGLV).

The protein belongs to the UPF0756 family.

It is found in the cell membrane. This is UPF0756 membrane protein YeaL from Shigella dysenteriae serotype 1 (strain Sd197).